An 81-amino-acid chain; its full sequence is Cytotoxin 2b (81 aa).

A signal peptide spans 1 to 21 (MKTLLLTLVVVTTVCLDLGYT). 4 disulfides stabilise this stretch: cysteine 24/cysteine 42, cysteine 35/cysteine 59, cysteine 63/cysteine 74, and cysteine 75/cysteine 80.

Belongs to the three-finger toxin family. Short-chain subfamily. Type IA cytotoxin sub-subfamily. As to quaternary structure, monomer in solution; Homodimer and oligomer in the presence of negatively charged lipids forming a pore with a size ranging between 20 and 30 Angstroms. In terms of tissue distribution, expressed by the venom gland.

It localises to the secreted. Its subcellular location is the target cell membrane. Functionally, shows cytolytic activity on many different cells by forming pore in lipid membranes. In vivo, increases heart rate or kills the animal by cardiac arrest. In addition, it binds to heparin with high affinity, interacts with Kv channel-interacting protein 1 (KCNIP1) in a calcium-independent manner, and binds to integrin alpha-V/beta-3 (ITGAV/ITGB3) with moderate affinity. The protein is Cytotoxin 2b of Naja sputatrix (Malayan spitting cobra).